Here is a 524-residue protein sequence, read N- to C-terminus: Tissue-resident T-cell transcription regulator protein ZNF683 (524 aa).

Positions 130-142 (NKDKLGKQPERAG) are enriched in basic and acidic residues. Disordered stretches follow at residues 130–166 (NKDK…NRKS) and 265–303 (QALP…LSSQ). C2H2-type zinc fingers lie at residues 322-344 (YECN…LRVH) and 350-372 (FQCA…HLVH). The C2H2-type 3; degenerate zinc-finger motif lies at 398-420 (REREVCHKRFSSSSNLKTHLRLH). The C2H2-type 4 zinc-finger motif lies at 426 to 448 (FQCSVCRSRFTQHIHLKLHHRLH).

The protein belongs to the krueppel C2H2-type zinc-finger protein family. In terms of tissue distribution, expressed in terminally differentiated effector CD8(+) T-cells, but not in naive and central memory cells. Expressed in terminally differentiated natural killer (NK) cells and natural killer (NKT) T-cells (at protein level). Expressed strongly in effector-type CD8(+) T-cells and weakly in naive and memory CD8(+) T-cells. Expressed in terminally differentiated natural killer (NK) cells. Isoform 2 is strongly expressed in effector CD8(+) T and natural killer (NK) cells. Isoform 1 is expressed in effector CD8(+) T and natural killer (NK) cells. (Microbial infection) Expressed in cytomegalovirus (CMV)-infected effector CD8(+) T-cells (at protein level).

It localises to the nucleus. Functionally, transcription factor that mediates a transcriptional program in various innate and adaptive immune tissue-resident lymphocyte T-cell types such as tissue-resident memory T (Trm), natural killer (trNK) and natural killer T (NKT) cells and negatively regulates gene expression of proteins that promote the egress of tissue-resident T-cell populations from non-lymphoid organs. Plays a role in the development, retention and long-term establishment of adaptive and innate tissue-resident lymphocyte T cell types in non-lymphoid organs, such as the skin and gut, but also in other nonbarrier tissues like liver and kidney, and therefore may provide immediate immunological protection against reactivating infections or viral reinfection. Also plays a role in the differentiation of both thymic and peripheral NKT cells. Negatively regulates the accumulation of interferon-gamma (IFN-gamma) in NKT cells at steady state or after antigenic stimulation. Positively regulates granzyme B production in NKT cells after innate stimulation. Associates with the transcriptional repressor PRDM1/BLIMP1 to chromatin at gene promoter regions. In terms of biological role, lacks transcriptional repressor activity. Binds to DNA within promoter regions of the transcriptional repressor PRDM1/BLIMP1 target sites. Unable to regulate interferon-gamma (IFN-gamma) production in cytomegalovirus (CMV)-infected effector CD8(+) T-cells. Its function is as follows. Transcriptional repressor that binds to DNA within promoter regions of the transcriptional repressor PRDM1/BLIMP1 target sites. Regulates interferon-gamma (IFN-gamma) production in cytomegalovirus (CMV)-infected effector CD8(+) T cells. The sequence is that of Tissue-resident T-cell transcription regulator protein ZNF683 from Homo sapiens (Human).